The sequence spans 388 residues: Oligogalacturonide lyase (388 aa).

The protein resides in the periplasm. It carries out the reaction 4-(4-deoxy-alpha-D-galact-4-enuronosyl)-D-galacturonate = 2 5-dehydro-4-deoxy-D-glucuronate. It functions in the pathway glycan metabolism; pectin degradation; 2-dehydro-3-deoxy-D-gluconate from pectin: step 3/5. Involved in degradation of pectin, which causes soft-rod disease in plants. The polypeptide is Oligogalacturonide lyase (ogl) (Pectobacterium atrosepticum (strain SCRI 1043 / ATCC BAA-672) (Erwinia carotovora subsp. atroseptica)).